We begin with the raw amino-acid sequence, 255 residues long: 5'-nucleotidase SurE (255 aa).

Positions 8, 9, 40, and 93 each coordinate a divalent metal cation.

This sequence belongs to the SurE nucleotidase family. Requires a divalent metal cation as cofactor.

Its subcellular location is the cytoplasm. The catalysed reaction is a ribonucleoside 5'-phosphate + H2O = a ribonucleoside + phosphate. Its function is as follows. Nucleotidase that shows phosphatase activity on nucleoside 5'-monophosphates. In Bradyrhizobium diazoefficiens (strain JCM 10833 / BCRC 13528 / IAM 13628 / NBRC 14792 / USDA 110), this protein is 5'-nucleotidase SurE.